Consider the following 881-residue polypeptide: Putative leucine-rich repeat receptor-like protein kinase At2g19210 (881 aa).

An N-terminal signal peptide occupies residues M1–A25. At Q26–Y518 the chain is on the extracellular side. N143, N234, N295, N310, N404, N419, N435, N446, and N462 each carry an N-linked (GlcNAc...) asparagine glycan. LRR repeat units follow at residues L438–L460 and N462–E483. A helical membrane pass occupies residues I519 to F539. At L540–R881 the chain is on the cytoplasmic side. The region spanning N576–V850 is the Protein kinase domain. ATP contacts are provided by residues L582 to V590 and K603. Position 648 is a phosphotyrosine (Y648). D699 acts as the Proton acceptor in catalysis. Phosphothreonine is present on residues T734 and T739. Y747 bears the Phosphotyrosine mark. The tract at residues S851 to R881 is disordered.

This sequence belongs to the protein kinase superfamily. Ser/Thr protein kinase family.

It localises to the cell membrane. The enzyme catalyses L-seryl-[protein] + ATP = O-phospho-L-seryl-[protein] + ADP + H(+). It catalyses the reaction L-threonyl-[protein] + ATP = O-phospho-L-threonyl-[protein] + ADP + H(+). The sequence is that of Putative leucine-rich repeat receptor-like protein kinase At2g19210 from Arabidopsis thaliana (Mouse-ear cress).